Consider the following 208-residue polypeptide: Putative 3-methyladenine DNA glycosylase (208 aa).

Residues 1-20 (MGRAHTVSRGEDHPPIARSE) are disordered.

Belongs to the DNA glycosylase MPG family.

The protein is Putative 3-methyladenine DNA glycosylase of Mesorhizobium japonicum (strain LMG 29417 / CECT 9101 / MAFF 303099) (Mesorhizobium loti (strain MAFF 303099)).